The following is a 321-amino-acid chain: Nodulation protein D 1 (321 aa).

An HTH lysR-type domain is found at 6-63 (LDLNLLVALDALMTERKLTAAARSINLSQPAMSAAITRLRTYFRDELFTMNGRELVPT). The H-T-H motif DNA-binding region spans 23-42 (LTAAARSINLSQPAMSAAIT).

This sequence belongs to the LysR transcriptional regulatory family.

Its function is as follows. NodD regulates the expression of the nodABCFE genes which encode other nodulation proteins. NodD is also a negative regulator of its own expression. Binds flavonoids as inducers. The chain is Nodulation protein D 1 (nodD1) from Bradyrhizobium japonicum.